Reading from the N-terminus, the 189-residue chain is Ribosome maturation factor RimP (189 aa).

It belongs to the RimP family.

The protein localises to the cytoplasm. Required for maturation of 30S ribosomal subunits. The sequence is that of Ribosome maturation factor RimP from Corynebacterium kroppenstedtii (strain DSM 44385 / JCM 11950 / CIP 105744 / CCUG 35717).